The chain runs to 569 residues: Santalene synthase (569 aa).

The (2E)-geranyl diphosphate site is built by Arg-284, Asp-321, Asp-325, and Arg-460. Residues Asp-321 and Asp-325 each coordinate Mg(2+). Residues 321 to 325 (DDGYD) carry the DDXXD motif motif. Mg(2+) is bound by residues Asn-463, Thr-467, and Glu-471.

The protein belongs to the terpene synthase family. Tpsb subfamily. Mg(2+) is required as a cofactor. The cofactor is Mn(2+).

The enzyme catalyses (2E,6E)-farnesyl diphosphate = (1S,5S,6R)-alpha-bergamotene + diphosphate. It carries out the reaction (2E,6E)-farnesyl diphosphate = (+)-alpha-santalene + diphosphate. It catalyses the reaction (2E,6E)-farnesyl diphosphate = (-)-beta-santalene + diphosphate. Its function is as follows. Catalyzes a mixture of sesquiterpenoids from (2E,6E)-farnesyl diphosphate in fragrance biosynthesis. Catalyzes the formation of alpha-santalene, beta-santalene, epi-beta-santalene and exo-alpha-bergamotene, as well as traces of alpha-farnesene and beta-farnesene. Also acts with (Z,Z)-farnesyl diphosphate isomer, producing alpha-endo-bergamotene, alpha-santalene, (Z)-beta-farnesene, epi-beta-santalene, and beta-santalene. The sequence is that of Santalene synthase from Santalum album (White sandalwood).